Consider the following 427-residue polypeptide: Putative acyl-CoA thioester hydrolase YbhC (427 aa).

The N-terminal stretch at 1–21 is a signal peptide; the sequence is MNTFSVSRLALALAFGVTLTA. The N-palmitoyl cysteine moiety is linked to residue C22. Residue C22 is the site of S-diacylglycerol cysteine attachment. The segment at 23 to 42 is disordered; sequence SSTPPDQRPSDQTAPGTSSR. C185 and C197 form a disulfide bridge. The Nucleophile role is filled by D285. Residue R345 coordinates substrate.

This sequence belongs to the pectinesterase family.

The protein resides in the cell outer membrane. Its function is as follows. Putative thioesterase. Does not bind pectin, and has no pectinesterase activity. The protein is Putative acyl-CoA thioester hydrolase YbhC (ybhC) of Escherichia coli (strain K12).